The chain runs to 331 residues: tRNA N6-adenosine threonylcarbamoyltransferase (331 aa).

Fe cation is bound by residues H109, H113, and Y130. Substrate is bound by residues 130–134, D162, D183, and S262; that span reads YLSGG. D290 contributes to the Fe cation binding site.

Belongs to the KAE1 / TsaD family. Fe(2+) serves as cofactor.

It localises to the cytoplasm. It catalyses the reaction L-threonylcarbamoyladenylate + adenosine(37) in tRNA = N(6)-L-threonylcarbamoyladenosine(37) in tRNA + AMP + H(+). In terms of biological role, required for the formation of a threonylcarbamoyl group on adenosine at position 37 (t(6)A37) in tRNAs that read codons beginning with adenine. Is probably involved in the transfer of the threonylcarbamoyl moiety of threonylcarbamoyl-AMP (TC-AMP) to the N6 group of A37. In Metallosphaera sedula (strain ATCC 51363 / DSM 5348 / JCM 9185 / NBRC 15509 / TH2), this protein is tRNA N6-adenosine threonylcarbamoyltransferase.